Here is a 409-residue protein sequence, read N- to C-terminus: Gamma-glutamyl phosphate reductase (409 aa).

The protein belongs to the gamma-glutamyl phosphate reductase family.

Its subcellular location is the cytoplasm. The enzyme catalyses L-glutamate 5-semialdehyde + phosphate + NADP(+) = L-glutamyl 5-phosphate + NADPH + H(+). It functions in the pathway amino-acid biosynthesis; L-proline biosynthesis; L-glutamate 5-semialdehyde from L-glutamate: step 2/2. Catalyzes the NADPH-dependent reduction of L-glutamate 5-phosphate into L-glutamate 5-semialdehyde and phosphate. The product spontaneously undergoes cyclization to form 1-pyrroline-5-carboxylate. The sequence is that of Gamma-glutamyl phosphate reductase from Koribacter versatilis (strain Ellin345).